Here is a 231-residue protein sequence, read N- to C-terminus: Orotidine 5'-phosphate decarboxylase (231 aa).

Substrate is bound by residues D11, K33, 60–69, T120, R181, Q190, G210, and R211; that span reads DLKFHDIPNT. The active-site Proton donor is K62.

This sequence belongs to the OMP decarboxylase family. Type 1 subfamily. In terms of assembly, homodimer.

The catalysed reaction is orotidine 5'-phosphate + H(+) = UMP + CO2. It participates in pyrimidine metabolism; UMP biosynthesis via de novo pathway; UMP from orotate: step 2/2. Its function is as follows. Catalyzes the decarboxylation of orotidine 5'-monophosphate (OMP) to uridine 5'-monophosphate (UMP). The polypeptide is Orotidine 5'-phosphate decarboxylase (Photobacterium profundum (strain SS9)).